Consider the following 218-residue polypeptide: MVTKSKRPKSGDRSGREPGNAGPIEQGDYLDGQLLIAMPVMEDERFARSVIYICAHSSEGAMGIIVNRPAGSIDFPELLVQLDIVEKPEQIKLPDHAESMKVLRGGPVETGRGFVLHSSDFFIKDATLPIDDGISLTATVDILRAIASGAGPKHAILALGYAGWAPGQLETEIQDNGWLHCDADADLVFGNDIEEKYDRALHKLGIEPGMLSAEAGHA.

The tract at residues 1 to 26 is disordered; sequence MVTKSKRPKSGDRSGREPGNAGPIEQ.

It belongs to the UPF0301 (AlgH) family.

The sequence is that of UPF0301 protein RPB_4502 from Rhodopseudomonas palustris (strain HaA2).